We begin with the raw amino-acid sequence, 349 residues long: Hyaluronidase Tab y 2.0101 (349 aa).

The signal sequence occupies residues 1–25 (MKLHQGLVCLSVLILLPTCILGDRK). 2 disulfide bridges follow: C37–C328 and C205–C216. N-linked (GlcNAc...) asparagine glycans are attached at residues N41, N81, N99, and N119. E129 serves as the catalytic Proton donor. A glycan (N-linked (GlcNAc...) asparagine) is linked at N147. N-linked (GlcNAc...) asparagine glycosylation is found at N251 and N297.

The protein belongs to the glycosyl hydrolase 56 family. As to expression, expressed in salivary glands.

It localises to the secreted. The enzyme catalyses Random hydrolysis of (1-&gt;4)-linkages between N-acetyl-beta-D-glucosamine and D-glucuronate residues in hyaluronate.. In terms of biological role, hydrolyzes high molecular weight hyaluronic acid to produce small oligosaccharides. The chain is Hyaluronidase Tab y 2.0101 from Tabanus yao (Horsefly).